The chain runs to 521 residues: GMP synthase [glutamine-hydrolyzing] (521 aa).

One can recognise a Glutamine amidotransferase type-1 domain in the interval 8–203; sequence KILILDFGAQ…VVDVCGCQTL (196 aa). C85 (nucleophile) is an active-site residue. Residues H177 and E179 contribute to the active site. One can recognise a GMPS ATP-PPase domain in the interval 204–396; sequence WTAANIIEDQ…LGLPRTMVYR (193 aa). Residue 231-237 participates in ATP binding; it reads SGGVDSS.

As to quaternary structure, homodimer.

It carries out the reaction XMP + L-glutamine + ATP + H2O = GMP + L-glutamate + AMP + diphosphate + 2 H(+). It participates in purine metabolism; GMP biosynthesis; GMP from XMP (L-Gln route): step 1/1. Catalyzes the synthesis of GMP from XMP. The protein is GMP synthase [glutamine-hydrolyzing] of Xanthomonas axonopodis pv. citri (strain 306).